The following is a 558-amino-acid chain: Factor VII-activating protease (558 aa).

A signal peptide spans 1-23; it reads MSVVMLVFRVLLLIALVGNSAIG. EGF-like domains lie at 71–107, 109–146, and 148–186; these read DDDP…SRCQ, VQNK…PDCS, and VLPV…RFCE. 18 cysteine pairs are disulfide-bonded: Cys-75–Cys-86, Cys-80–Cys-95, Cys-97–Cys-106, Cys-113–Cys-123, Cys-118–Cys-134, Cys-136–Cys-145, Cys-152–Cys-163, Cys-157–Cys-174, Cys-176–Cys-185, Cys-192–Cys-274, Cys-213–Cys-255, Cys-244–Cys-269, Cys-299–Cys-433, Cys-345–Cys-361, Cys-353–Cys-422, Cys-445–Cys-513, Cys-475–Cys-491, and Cys-503–Cys-531. The 84-residue stretch at 191-274 folds into the Kringle domain; the sequence is DCYVGDGYSY…KWEYCNVEVC (84 aa). In terms of domain architecture, Peptidase S1 spans 312-553; sequence IYGGFKSTAG…FLNWIKTTMH (242 aa). Catalysis depends on charge relay system residues His-360 and Asp-409. Ser-507 acts as the Charge relay system in catalysis.

The protein belongs to the peptidase S1 family. As to quaternary structure, heterodimer; disulfide-linked. Heterodimer of a 50 kDa heavy and a 27 kDa light chain linked by a disulfide bond. Post-translationally, proteolytic cleavage at Gly-23 or Met-27 can give rise to the 50 kDa heavy chain (HC) and cleavage at Arg-311 or Lys-317 can give rise to the 27 kDa light chain (LC). The HC can undergo further proteolytic cleavage giving rise to a 26 kDa fragment. The LC can undergo further proteolytic cleavage at Arg-311 leading to a 17-kDa fragment and at Arg-478 leading to a 8-kDa fragment.

The protein resides in the secreted. Functionally, cleaves the alpha-chain at multiple sites and the beta-chain between 'Lys-53' and 'Lys-54' but not the gamma-chain of fibrinogen and therefore does not initiate the formation of the fibrin clot and does not cause the fibrinolysis directly. It does not cleave (activate) prothrombin and plasminogen but converts the inactive single chain urinary plasminogen activator (pro-urokinase) to the active two chain form. Activates coagulation factor VII. May function as a tumor suppressor negatively regulating cell proliferation and cell migration. The polypeptide is Factor VII-activating protease (Rattus norvegicus (Rat)).